We begin with the raw amino-acid sequence, 156 residues long: Large ribosomal subunit protein bL17 (156 aa).

Residues 127–156 (RATRAAASKKAAEEKAAEAAEEKDEAAEEK) are disordered. The segment covering 136-146 (KAAEEKAAEAA) has biased composition (basic and acidic residues). Residues 147 to 156 (EEKDEAAEEK) are compositionally biased toward acidic residues.

The protein belongs to the bacterial ribosomal protein bL17 family. As to quaternary structure, part of the 50S ribosomal subunit. Contacts protein L32.

This is Large ribosomal subunit protein bL17 from Corynebacterium urealyticum (strain ATCC 43042 / DSM 7109).